The primary structure comprises 962 residues: MPRSTWFKALLLLVALWAPLSQAETGWQPIQETIRKSDKDNRQYQAIRLDNGMVVLLVSDPQAVKSLSALVVPVGSLEDPEAYQGLAHYLEHMSLMGSKKYPQADSLAEYLKMHGGSHNASTAPYRTAFYLEVENDALPGAVDRLADAIAEPLLDKKYAERERNAVNAELTMARTRDGMRMAQVSAETINPAHPGSKFSGGNLETLSDKPGNPVQQALKDFHEKYYSANLMKAVIYSNKPLPELAKMAADTFGRVPNKESKKPEITVPVVTDAQKGIIIHYVPALPRKVLRVEFRIDNNSAKFRSKTDELITYLIGNRSPGTLSDWLQKQGLVEGISANSDPIVNGNSGVLAISASLTDKGLANRDQVVAAIFSYLNLLREKGIDKQYFDELANVLDIDFRYPSITRDMDYVEWLADTMIRVPVEHTLDAVNIADRYDAKAVKERLAMMTPQNARIWYISPKEPHNKTAYFVDAPYQVDKISAQTFADWQKKAADIALSLPELNPYIPDDFSLIKSEKKYDHPELIVDESNLRVVYAPSRYFASEPKADVSLILRNPKAMDSARNQVMFALNDYLAGLALDQLSNQASVGGISFSTNANNGLMVNANGYTQRLPQLFQALLEGYFSYTATEDQLEQAKSWYNQMMDSAEKGKAFEQAIMPAQMLSQVPYFSRDERRKILPSITLKEVLAYRDALKSGARPEFMVIGNMTEAQATTLARDVQKQLGADGSEWCRNKDVVVDKKQSVIFEKAGNSTDSALAAVFVPTGYDEYTSSAYSSLLGQIVQPWFYNQLRTEEQLGYAVFAFPMSVGRQWGMGFLLQSNDKQPSFLWERYKAFFPTAEAKLRAMKPDEFAQIQQAVITQMLQAPQTLGEEASKLSKDFDRGNMRFDSRDKIVAQIKLLTPQKLADFFHQAVVEPQGMAILSQISGSQNGKAEYVHPEGWKVWENVSALQQTMPLMSEKNE.

The signal sequence occupies residues 1–23 (MPRSTWFKALLLLVALWAPLSQA). H88 lines the Zn(2+) pocket. Catalysis depends on E91, which acts as the Proton acceptor. Residues H92 and E169 each coordinate Zn(2+).

The protein belongs to the peptidase M16 family. As to quaternary structure, monomer. It depends on Zn(2+) as a cofactor.

It localises to the periplasm. It catalyses the reaction Preferential cleavage of 16-Tyr-|-Leu-17 and 25-Phe-|-Tyr-26 bonds of oxidized insulin B chain. Also acts on other substrates of Mw less than 7 kDa such as insulin and glucagon.. Its function is as follows. Endopeptidase that degrades small peptides of less than 7 kDa, such as glucagon and insulin. This Escherichia coli (strain K12) protein is Protease 3 (ptrA).